A 154-amino-acid polypeptide reads, in one-letter code: 3-dehydroquinate dehydratase (154 aa).

Tyr23 serves as the catalytic Proton acceptor. Residues Asn74, His80, and Asp87 each coordinate substrate. The active-site Proton donor is the His100. Substrate is bound by residues 101 to 102 (LS) and Arg111.

It belongs to the type-II 3-dehydroquinase family. In terms of assembly, homododecamer.

It catalyses the reaction 3-dehydroquinate = 3-dehydroshikimate + H2O. It participates in metabolic intermediate biosynthesis; chorismate biosynthesis; chorismate from D-erythrose 4-phosphate and phosphoenolpyruvate: step 3/7. In terms of biological role, catalyzes a trans-dehydration via an enolate intermediate. This is 3-dehydroquinate dehydratase from Actinobacillus pleuropneumoniae serotype 5b (strain L20).